We begin with the raw amino-acid sequence, 165 residues long: Cyclic pyranopterin monophosphate synthase (165 aa).

Substrate is bound by residues 76–78 (LCH) and 114–115 (ME). The active site involves Asp129.

This sequence belongs to the MoaC family. As to quaternary structure, homohexamer; trimer of dimers.

The enzyme catalyses (8S)-3',8-cyclo-7,8-dihydroguanosine 5'-triphosphate = cyclic pyranopterin phosphate + diphosphate. Its pathway is cofactor biosynthesis; molybdopterin biosynthesis. Catalyzes the conversion of (8S)-3',8-cyclo-7,8-dihydroguanosine 5'-triphosphate to cyclic pyranopterin monophosphate (cPMP). In Brucella melitensis biotype 2 (strain ATCC 23457), this protein is Cyclic pyranopterin monophosphate synthase.